The primary structure comprises 160 residues: uncharacterized protein (160 aa).

Residues 1 to 31 (METEKPNTDVKVAQDLEKLKLDEKHKDEKKD) are compositionally biased toward basic and acidic residues. Residues 1-160 (METEKPNTDV…DKKDKEHKKE (160 aa)) form a disordered region. Residues 20–111 (KLDEKHKDEK…KSKLEGKKDK (92 aa)) adopt a coiled-coil conformation. The segment covering 32–42 (KKDKKDKKDKK) has biased composition (basic residues). Basic and acidic residues predominate over residues 43 to 160 (DKKEKTPEEI…DKKDKEHKKE (118 aa)).

This is an uncharacterized protein from Dictyostelium discoideum (Social amoeba).